Here is a 392-residue protein sequence, read N- to C-terminus: DNA-directed RNA polymerase subunit Rpo1C (392 aa).

Belongs to the RNA polymerase beta' chain family. In terms of assembly, part of the RNA polymerase complex.

It localises to the cytoplasm. It carries out the reaction RNA(n) + a ribonucleoside 5'-triphosphate = RNA(n+1) + diphosphate. Its function is as follows. DNA-dependent RNA polymerase (RNAP) catalyzes the transcription of DNA into RNA using the four ribonucleoside triphosphates as substrates. Forms part of the jaw domain. The sequence is that of DNA-directed RNA polymerase subunit Rpo1C from Saccharolobus islandicus (strain Y.N.15.51 / Yellowstone #2) (Sulfolobus islandicus).